We begin with the raw amino-acid sequence, 79 residues long: Conotoxin PnMSGL-03 (79 aa).

The N-terminal stretch at 1 to 20 is a signal peptide; that stretch reads MSRLGIMVLTLLLLVFIVTS. The propeptide occupies 21 to 44; it reads HQDAGEKQATQRDAINFRWRRSLI. 3 cysteine pairs are disulfide-bonded: Cys52/Cys64, Cys56/Cys73, and Cys63/Cys77. Leu78 bears the Leucine amide mark.

Belongs to the conotoxin O3 superfamily. As to expression, expressed by the venom duct.

The protein resides in the secreted. In Conus pennaceus (Feathered cone), this protein is Conotoxin PnMSGL-03.